A 463-amino-acid chain; its full sequence is NADH dehydrogenase [ubiquinone] iron-sulfur protein 2, mitochondrial (463 aa).

A mitochondrion-targeting transit peptide spans 1–33; that stretch reads MAALRALGGLRGVAAQVLRPGAGVRLPIQPSRG. Lysine 62 is modified (N6-acetyllysine). At arginine 118 the chain carries Symmetric dimethylarginine. [4Fe-4S] cluster is bound by residues cysteine 326, cysteine 332, and cysteine 347.

This sequence belongs to the complex I 49 kDa subunit family. As to quaternary structure, core subunit of respiratory chain NADH dehydrogenase (Complex I) which is composed of 45 different subunits. Component of the iron-sulfur (IP) fragment of the enzyme. Interacts with NDUFAF3. Interacts with NDUFAF7. Interacts with CERS2. [4Fe-4S] cluster is required as a cofactor. In terms of processing, dimethylation at Arg-118 by NDUFAF7 takes place after NDUFS2 assembles into the complex I, leading to stabilize the early intermediate complex.

It localises to the mitochondrion inner membrane. The catalysed reaction is a ubiquinone + NADH + 5 H(+)(in) = a ubiquinol + NAD(+) + 4 H(+)(out). Its function is as follows. Core subunit of the mitochondrial membrane respiratory chain NADH dehydrogenase (Complex I) which catalyzes electron transfer from NADH through the respiratory chain, using ubiquinone as an electron acceptor. Essential for the catalytic activity and assembly of complex I. Redox-sensitive, critical component of the oxygen-sensing pathway in the pulmonary vasculature which plays a key role in acute pulmonary oxygen-sensing and hypoxic pulmonary vasoconstriction. Plays an important role in carotid body sensing of hypoxia. Essential for glia-like neural stem and progenitor cell proliferation, differentiation and subsequent oligodendrocyte or neuronal maturation. This is NADH dehydrogenase [ubiquinone] iron-sulfur protein 2, mitochondrial (NDUFS2) from Pongo pygmaeus (Bornean orangutan).